The following is a 44-amino-acid chain: Photosystem I reaction center subunit IX (44 aa).

The chain crosses the membrane as a helical span at residues Tyr7–Ile27.

This sequence belongs to the PsaJ family.

It is found in the plastid. The protein localises to the chloroplast thylakoid membrane. May help in the organization of the PsaE and PsaF subunits. The polypeptide is Photosystem I reaction center subunit IX (Populus alba (White poplar)).